Consider the following 300-residue polypeptide: Probable acetyltransferase Rv3034c (300 aa).

An N-terminal signal peptide occupies residues 1-25 (MNVLSLGSSSGVVWGRVPITAPAGA).

The protein belongs to the transferase hexapeptide repeat family.

In terms of biological role, may be involved in the biosynthesis of 6-O-methylglucosyl-containing lipopolysaccharides (MGLP). Functionally, regulates host peroxisome homeostasis in response to intracellular redox levels to favor mycobacterial infection in macrophage. Induces the expression of host peroxisome biogenesis and proliferation factors as well as peroxisome associated enzymes. Inhibits the induction of host pexophagy mechanism by down-regulating the expression of pexophagy associated proteins and adapter molecules in infected macrophages. However, during increased oxidative stress conditions, it induces degradation of dysfunctional and damaged peroxisomes. Regulation of peroxisome biogenesis and degradation is dependent upon host p-mTORC1 mediated signaling pathway. The polypeptide is Probable acetyltransferase Rv3034c (Mycobacterium tuberculosis (strain ATCC 25618 / H37Rv)).